The following is a 339-amino-acid chain: Serine/threonine-protein kinase SRK2J (339 aa).

Positions 4-260 (YEMVKDLGFG…LKEIKSHAWF (257 aa)) constitute a Protein kinase domain. ATP-binding positions include 10 to 18 (LGFGNFGLA) and Lys-33. Catalysis depends on Asp-123, which acts as the Proton acceptor. Positions 308 to 339 (SRPVESLGSDKKDDDEEEYLDANDEEWYDDYA) are disordered. A compositionally biased stretch (acidic residues) spans 320–339 (DDDEEEYLDANDEEWYDDYA).

This sequence belongs to the protein kinase superfamily. Ser/Thr protein kinase family. Expressed in seedlings.

The enzyme catalyses L-seryl-[protein] + ATP = O-phospho-L-seryl-[protein] + ADP + H(+). It catalyses the reaction L-threonyl-[protein] + ATP = O-phospho-L-threonyl-[protein] + ADP + H(+). The chain is Serine/threonine-protein kinase SRK2J (SRK2J) from Arabidopsis thaliana (Mouse-ear cress).